The chain runs to 173 residues: Crossover junction endodeoxyribonuclease RuvC (173 aa).

Active-site residues include Asp-8, Glu-67, and Asp-139. The Mg(2+) site is built by Asp-8, Glu-67, and Asp-139.

This sequence belongs to the RuvC family. Homodimer which binds Holliday junction (HJ) DNA. The HJ becomes 2-fold symmetrical on binding to RuvC with unstacked arms; it has a different conformation from HJ DNA in complex with RuvA. In the full resolvosome a probable DNA-RuvA(4)-RuvB(12)-RuvC(2) complex forms which resolves the HJ. Mg(2+) is required as a cofactor.

The protein resides in the cytoplasm. It carries out the reaction Endonucleolytic cleavage at a junction such as a reciprocal single-stranded crossover between two homologous DNA duplexes (Holliday junction).. The RuvA-RuvB-RuvC complex processes Holliday junction (HJ) DNA during genetic recombination and DNA repair. Endonuclease that resolves HJ intermediates. Cleaves cruciform DNA by making single-stranded nicks across the HJ at symmetrical positions within the homologous arms, yielding a 5'-phosphate and a 3'-hydroxyl group; requires a central core of homology in the junction. The consensus cleavage sequence is 5'-(A/T)TT(C/G)-3'. Cleavage occurs on the 3'-side of the TT dinucleotide at the point of strand exchange. HJ branch migration catalyzed by RuvA-RuvB allows RuvC to scan DNA until it finds its consensus sequence, where it cleaves and resolves the cruciform DNA. This is Crossover junction endodeoxyribonuclease RuvC from Shewanella loihica (strain ATCC BAA-1088 / PV-4).